Here is a 143-residue protein sequence, read N- to C-terminus: Interleukin-4 (143 aa).

The first 19 residues, Met-1–Gly-19, serve as a signal peptide directing secretion. 2 cysteine pairs are disulfide-bonded: Cys-48-Cys-88 and Cys-70-Cys-115. Asn-62 and Asn-91 each carry an N-linked (GlcNAc...) asparagine glycan.

It belongs to the IL-4/IL-13 family.

The protein resides in the secreted. Functionally, participates in at least several B-cell activation processes as well as of other cell types. It is a costimulator of DNA-synthesis. It induces the expression of class II MHC molecules on resting B-cells. It enhances both secretion and cell surface expression of IgE and IgG1. It also regulates the expression of the low affinity Fc receptor for IgE (CD23) on both lymphocytes and monocytes. Positively regulates IL31RA expression in macrophages. Stimulates autophagy in dendritic cells by interfering with mTORC1 signaling and through the induction of RUFY4. The polypeptide is Interleukin-4 (IL4) (Meriones unguiculatus (Mongolian jird)).